The primary structure comprises 858 residues: Piwi-like protein 1 (858 aa).

The segment covering 1–13 (MTGRARARSRGRG) has biased composition (basic residues). The interval 1–56 (MTGRARARSRGRGRGQEPAAPGAQPPVSQEAAKPVVSTPSEGQLVGRGRQKPAPGA) is disordered. A compositionally biased stretch (low complexity) spans 16-26 (QEPAAPGAQPP). One can recognise a PAZ domain in the interval 276–388 (TVLDFMYSLR…LVPEFCYLTG (113 aa)). The segment at 314–316 (TYR) is required for binding 2'-O-methylated 3'-end of piRNAs. Residues 476–612 (SKEMRGLPLI…LQMNCKMGGE (137 aa)) are MID region. The 293-residue stretch at 552 to 844 (MVVVILPTNR…LAFLVGQSIH (293 aa)) folds into the Piwi domain. Catalysis depends on residues Asp629, Glu667, Asp699, and His833.

Belongs to the argonaute family. Piwi subfamily. Mg(2+) is required as a cofactor. Methylated on arginine residues; required for the interaction with Tudor domain-containing protein and subsequent localization to the meiotic nuage, also named P granule. As to expression, expressed exclusively in the adult gonads; expression in the ovary weaker than in the testis (at protein level). During neurogenesis and organogenesis, expression is detected in CNS (midbrain and eye) and fin buds. Starting from 24 hours post-fertilization, expression is found in the genital ridge.

It localises to the cytoplasm. Its function is as follows. Plays a central role during gametogenesis by repressing transposable elements and preventing their mobilization, which is essential for the germline integrity. Acts via the piRNA metabolic process, which mediates the repression of transposable elements during meiosis by forming complexes composed of piRNAs and Piwi proteins and governs the methylation and subsequent repression of transposons. Directly binds methylated piRNAs, a class of 24 to 30 nucleotide RNAs that are generated by a Dicer-independent mechanism and are primarily derived from transposons and other repeated sequence elements. Has a strong preference for piRNAs with a uridine nucleotide at their 5'-end (g1U preference, also named 1U-bias) and binds piRNAs in an opposite direction compared to piwil2/zili. Participates in a piRNA amplification loop with piwil2/zili. Not involved in the piRNA amplification loop, also named ping-pong amplification cycle. Acts as an endoribonuclease that cleaves transposon messenger RNAs. This chain is Piwi-like protein 1 (piwil1), found in Danio rerio (Zebrafish).